The following is a 513-amino-acid chain: ATP synthase subunit alpha (513 aa).

G169–T176 is a binding site for ATP.

It belongs to the ATPase alpha/beta chains family. F-type ATPases have 2 components, CF(1) - the catalytic core - and CF(0) - the membrane proton channel. CF(1) has five subunits: alpha(3), beta(3), gamma(1), delta(1), epsilon(1). CF(0) has three main subunits: a(1), b(2) and c(9-12). The alpha and beta chains form an alternating ring which encloses part of the gamma chain. CF(1) is attached to CF(0) by a central stalk formed by the gamma and epsilon chains, while a peripheral stalk is formed by the delta and b chains.

Its subcellular location is the cell inner membrane. The catalysed reaction is ATP + H2O + 4 H(+)(in) = ADP + phosphate + 5 H(+)(out). Its function is as follows. Produces ATP from ADP in the presence of a proton gradient across the membrane. The alpha chain is a regulatory subunit. This is ATP synthase subunit alpha from Aeromonas hydrophila subsp. hydrophila (strain ATCC 7966 / DSM 30187 / BCRC 13018 / CCUG 14551 / JCM 1027 / KCTC 2358 / NCIMB 9240 / NCTC 8049).